The chain runs to 667 residues: Fatty acyl-CoA synthetase A (667 aa).

This sequence belongs to the ATP-dependent AMP-binding enzyme family.

The protein localises to the endosome membrane. It carries out the reaction a long-chain fatty acid + ATP + CoA = a long-chain fatty acyl-CoA + AMP + diphosphate. Long chain fatty acid acyl-CoA synthetases catalyze the formation of a thiester bond between a free fatty acid and coenzyme A during fatty acid metabolic process. May mediate fatty acid retrieval from the lumen of endosomes into the cytoplasm. This Dictyostelium discoideum (Social amoeba) protein is Fatty acyl-CoA synthetase A (fcsA).